The chain runs to 413 residues: MKPICIIPARSGSKGLPDKNMLFLSGKPMIFHTIDAAIESGMFDKKDIFVSTDSELYREICLERGISVVMRKPELSTDQATSYDMLKDFLSDYEDNQEFVLLQVTSPLRKSWHIKEAMEYYSSHDVDNVVSFSEVEKHPSLFTTLSDEGYAIDMVGADKGYRRQDLQPLYYPNGAIFISNKETYLREKSFFTSRTYAYQMAKEFSLDVDTRDDFIHVIGHLFFDYAIREKENKVFYKEGYSRLFNREASKIILGDSKTISTSLESYHNYSQGGVTLATMLENLPNFLTANVTEAFVSIGVNDLITGYSVEEIFSNFQKLYSLLAENKIKMRLTTIAYTLFRETVNNADIEKINQWLTEFCYQNQIPLLDINRFLSKDGNLNYHLTSDGLHFTQEANDLLQSQYQLFVDEVKTL.

Belongs to the CMP-NeuNAc synthase family. Mg(2+) serves as cofactor. Mn(2+) is required as a cofactor.

It is found in the cytoplasm. The enzyme catalyses an N-acylneuraminate + CTP = a CMP-N-acyl-beta-neuraminate + diphosphate. In terms of biological role, catalyzes the formation of CMP-N-acetylneuraminic acid (CMP-NeuNAc), which is essential for the formation of the capsule. The sequence is that of N-acylneuraminate cytidylyltransferase (neuA) from Streptococcus agalactiae serotype V (strain ATCC BAA-611 / 2603 V/R).